A 297-amino-acid chain; its full sequence is Putative heme-binding peroxidase (297 aa).

Histidine 74 functions as the Proton acceptor in the catalytic mechanism. Histidine 198 lines the heme b pocket. The Tryptophan radical intermediate role is filled by tryptophan 214.

This sequence belongs to the peroxidase family. Cytochrome c peroxidase subfamily. Heme b serves as cofactor.

Destroys radicals which are normally produced within the cells and which are toxic to biological systems. This chain is Putative heme-binding peroxidase, found in Yarrowia lipolytica (strain CLIB 122 / E 150) (Yeast).